The sequence spans 239 residues: Endonuclease V (239 aa).

Positions 50 and 118 each coordinate Mg(2+).

This sequence belongs to the endonuclease V family. Mg(2+) serves as cofactor.

The protein resides in the cytoplasm. The enzyme catalyses Endonucleolytic cleavage at apurinic or apyrimidinic sites to products with a 5'-phosphate.. Its function is as follows. DNA repair enzyme involved in the repair of deaminated bases. Selectively cleaves double-stranded DNA at the second phosphodiester bond 3' to a deoxyinosine leaving behind the intact lesion on the nicked DNA. In Xylella fastidiosa (strain Temecula1 / ATCC 700964), this protein is Endonuclease V.